Here is a 74-residue protein sequence, read N- to C-terminus: Insertion element IS986 uncharacterized 8.2 kDa protein (74 aa).

The protein is Insertion element IS986 uncharacterized 8.2 kDa protein of Mycobacterium tuberculosis.